The following is a 237-amino-acid chain: Phosphoribosylaminoimidazole-succinocarboxamide synthase (237 aa).

The protein belongs to the SAICAR synthetase family.

It carries out the reaction 5-amino-1-(5-phospho-D-ribosyl)imidazole-4-carboxylate + L-aspartate + ATP = (2S)-2-[5-amino-1-(5-phospho-beta-D-ribosyl)imidazole-4-carboxamido]succinate + ADP + phosphate + 2 H(+). Its pathway is purine metabolism; IMP biosynthesis via de novo pathway; 5-amino-1-(5-phospho-D-ribosyl)imidazole-4-carboxamide from 5-amino-1-(5-phospho-D-ribosyl)imidazole-4-carboxylate: step 1/2. This is Phosphoribosylaminoimidazole-succinocarboxamide synthase from Enterococcus faecalis (strain ATCC 700802 / V583).